A 178-amino-acid chain; its full sequence is Cytochrome b6-f complex iron-sulfur subunit (178 aa).

Residues 20–42 form a helical membrane-spanning segment; the sequence is LLTFGTATGVALGALYPVANYFM. A Rieske domain is found at 65–161; the sequence is KTGWLASHQA…VDVDDDAVLV (97 aa). The [2Fe-2S] cluster site is built by Cys107, His109, Cys125, and His128. Cys112 and Cys127 form a disulfide bridge.

The protein belongs to the Rieske iron-sulfur protein family. In terms of assembly, the 4 large subunits of the cytochrome b6-f complex are cytochrome b6, subunit IV (17 kDa polypeptide, PetD), cytochrome f and the Rieske protein, while the 4 small subunits are PetG, PetL, PetM and PetN. The complex functions as a dimer. [2Fe-2S] cluster is required as a cofactor.

The protein localises to the cellular thylakoid membrane. It carries out the reaction 2 oxidized [plastocyanin] + a plastoquinol + 2 H(+)(in) = 2 reduced [plastocyanin] + a plastoquinone + 4 H(+)(out). Component of the cytochrome b6-f complex, which mediates electron transfer between photosystem II (PSII) and photosystem I (PSI), cyclic electron flow around PSI, and state transitions. This Prochlorococcus marinus subsp. pastoris (strain CCMP1986 / NIES-2087 / MED4) protein is Cytochrome b6-f complex iron-sulfur subunit.